A 576-amino-acid chain; its full sequence is Arginine--tRNA ligase (576 aa).

A 'HIGH' region motif is present at residues 132 to 142 (ANPTGPMHIGH).

The protein belongs to the class-I aminoacyl-tRNA synthetase family. Monomer.

Its subcellular location is the cytoplasm. It catalyses the reaction tRNA(Arg) + L-arginine + ATP = L-arginyl-tRNA(Arg) + AMP + diphosphate. The sequence is that of Arginine--tRNA ligase from Ehrlichia chaffeensis (strain ATCC CRL-10679 / Arkansas).